Here is a 1133-residue protein sequence, read N- to C-terminus: Lysylphosphatidylglycerol biosynthesis bifunctional protein LysX (1133 aa).

Residues 1–626 are phosphatidylglycerol lysyltransferase; sequence MTTVDASPGI…LLHHDGSTPD (626 aa). Helical transmembrane passes span 43-63, 82-102, 109-129, 140-160, 177-197, 233-253, and 575-595; these read VPAA…IASV, LFNF…LAAA, IAWL…AVDM, FGEN…VLSY, AVLV…VELF, LNAI…IVLF, and LIPR…LPFS. The lysine--tRNA ligase stretch occupies residues 627-1133; it reads VSGLQTADVD…TLPFPLAKPH (507 aa). Residues D1045 and E1052 each coordinate Mg(2+).

In the N-terminal section; belongs to the LPG synthetase family. This sequence in the C-terminal section; belongs to the class-II aminoacyl-tRNA synthetase family. Mg(2+) serves as cofactor.

It is found in the cell membrane. The enzyme catalyses tRNA(Lys) + L-lysine + ATP = L-lysyl-tRNA(Lys) + AMP + diphosphate. The catalysed reaction is L-lysyl-tRNA(Lys) + a 1,2-diacyl-sn-glycero-3-phospho-(1'-sn-glycerol) = a 1,2-diacyl-sn-glycero-3-phospho-1'-(3'-O-L-lysyl)-sn-glycerol + tRNA(Lys). Catalyzes the production of L-lysyl-tRNA(Lys)transfer and the transfer of a lysyl group from L-lysyl-tRNA(Lys) to membrane-bound phosphatidylglycerol (PG), which produces lysylphosphatidylglycerol (LPG), one of the components of the bacterial membrane with a positive net charge. LPG synthesis contributes to the resistance to cationic antimicrobial peptides (CAMPs) and likely protects M.tuberculosis against the CAMPs produced by competiting microorganisms (bacteriocins). In fact, the modification of anionic phosphatidylglycerol with positively charged L-lysine results in repulsion of the peptides. This Mycobacterium leprae (strain Br4923) protein is Lysylphosphatidylglycerol biosynthesis bifunctional protein LysX (lysX).